Consider the following 525-residue polypeptide: Probable CoA ligase CCL9 (525 aa).

ATP contacts are provided by residues 171 to 179, 311 to 316, Asp395, 407 to 410, and Lys501; these read TSGTTSRPK, EAYAMT, and LVGR. The SBD1 stretch occupies residues 242–311; it reads SASTFWSDMI…EESFGAPVLE (70 aa). Residues 312–375 form an SBD2 region; the sequence is AYAMTEAAHL…IRGPNVTKGY (64 aa).

This sequence belongs to the ATP-dependent AMP-binding enzyme family.

The protein localises to the cytoplasm. It localises to the cytosol. This is Probable CoA ligase CCL9 from Humulus lupulus (European hop).